A 148-amino-acid chain; its full sequence is Large ribosomal subunit protein bL9 (148 aa).

This sequence belongs to the bacterial ribosomal protein bL9 family.

Functionally, binds to the 23S rRNA. The polypeptide is Large ribosomal subunit protein bL9 (Alkaliphilus oremlandii (strain OhILAs) (Clostridium oremlandii (strain OhILAs))).